Here is a 100-residue protein sequence, read N- to C-terminus: Urease subunit gamma (100 aa).

Belongs to the urease gamma subunit family. Heterotrimer of UreA (gamma), UreB (beta) and UreC (alpha) subunits. Three heterotrimers associate to form the active enzyme.

It localises to the cytoplasm. It catalyses the reaction urea + 2 H2O + H(+) = hydrogencarbonate + 2 NH4(+). It participates in nitrogen metabolism; urea degradation; CO(2) and NH(3) from urea (urease route): step 1/1. This is Urease subunit gamma from Pseudomonas aeruginosa (strain UCBPP-PA14).